The chain runs to 448 residues: Phosphoglucosamine mutase (448 aa).

Ser100 functions as the Phosphoserine intermediate in the catalytic mechanism. Positions 100, 240, 242, and 244 each coordinate Mg(2+). Ser100 is subject to Phosphoserine.

The protein belongs to the phosphohexose mutase family. Mg(2+) serves as cofactor. In terms of processing, activated by phosphorylation.

It carries out the reaction alpha-D-glucosamine 1-phosphate = D-glucosamine 6-phosphate. Functionally, catalyzes the conversion of glucosamine-6-phosphate to glucosamine-1-phosphate. This chain is Phosphoglucosamine mutase, found in Bacillus mycoides (strain KBAB4) (Bacillus weihenstephanensis).